The primary structure comprises 84 residues: U21-theraphotoxin-Cg1a 2 (84 aa).

Residues Met1–Ala21 form the signal peptide. The propeptide occupies Glu22 to Arg47. 3 disulfide bridges follow: Cys49-Cys63, Cys56-Cys68, and Cys62-Cys76. Val82 bears the Valine amide mark.

This sequence belongs to the neurotoxin 10 (Hwtx-1) family. 05 (F4a) subfamily. As to expression, expressed by the venom gland.

It localises to the secreted. In terms of biological role, probable ion channel inhibitor. The polypeptide is U21-theraphotoxin-Cg1a 2 (Chilobrachys guangxiensis (Chinese earth tiger tarantula)).